Here is a 245-residue protein sequence, read N- to C-terminus: Ribosomal RNA small subunit methyltransferase G (245 aa).

S-adenosyl-L-methionine is bound by residues Gly-90, Leu-95, 140–141 (AE), and Arg-158.

Belongs to the methyltransferase superfamily. RNA methyltransferase RsmG family.

The protein localises to the cytoplasm. Its function is as follows. Specifically methylates the N7 position of guanine in position 518 of 16S rRNA. The polypeptide is Ribosomal RNA small subunit methyltransferase G (Mycobacterium leprae (strain TN)).